The sequence spans 763 residues: Fibroblast growth factor receptor (763 aa).

An N-terminal signal peptide occupies residues Met-1 to Ala-27. Residues Ser-28–Asn-291 are Extracellular-facing. Residues Phe-34–Tyr-74 form a disordered region. 2 Ig-like C2-type domains span residues Pro-73 to Asp-164 and Pro-173 to Ser-270. Cys-98 and Cys-148 are joined by a disulfide. N-linked (GlcNAc...) asparagine glycans are attached at residues Asn-158, Asn-182, Asn-220, Asn-230, Asn-243, and Asn-288. Cys-195 and Cys-254 are joined by a disulfide. Residues Ile-292–Val-312 form a helical membrane-spanning segment. Over Leu-313–Ala-763 the chain is Cytoplasmic. Positions Ile-382–Leu-672 constitute a Protein kinase domain. ATP-binding positions include Leu-388–Val-396 and Lys-417. Asp-537 acts as the Proton acceptor in catalysis. Tyr-568 is subject to Phosphotyrosine; by autocatalysis. The segment covering Tyr-691–Ser-711 has biased composition (acidic residues). The tract at residues Tyr-691–Ala-742 is disordered.

This sequence belongs to the protein kinase superfamily. Tyr protein kinase family. Fibroblast growth factor receptor subfamily.

It is found in the membrane. The enzyme catalyses L-tyrosyl-[protein] + ATP = O-phospho-L-tyrosyl-[protein] + ADP + H(+). Receptor for basic fibroblast growth factor. This Halocynthia roretzi (Sea squirt) protein is Fibroblast growth factor receptor (FGFR).